The sequence spans 500 residues: 4-aminobutyrate aminotransferase, mitochondrial (500 aa).

The transit peptide at 1 to 28 directs the protein to the mitochondrion; sequence MASMLVAQRLACSFQHSYRLLVPGSRHI. C163 contributes to the [2Fe-2S] cluster binding site. A pyridoxal 5'-phosphate-binding site is contributed by 164 to 165; it reads GS. C166 is a binding site for [2Fe-2S] cluster. Residue R220 participates in substrate binding. Position 231 is an N6-succinyllysine (K231). K252 carries the post-translational modification N6-acetyllysine; alternate. The residue at position 252 (K252) is an N6-succinyllysine; alternate. N6-acetyllysine occurs at positions 279 and 318. K357 carries the N6-(pyridoxal phosphate)lysine modification. T381 provides a ligand contact to pyridoxal 5'-phosphate. N6-acetyllysine; alternate is present on K413. The residue at position 413 (K413) is an N6-succinyllysine; alternate. K452 and K470 each carry N6-acetyllysine.

The protein belongs to the class-III pyridoxal-phosphate-dependent aminotransferase family. As to quaternary structure, homodimer; disulfide-linked. Requires pyridoxal 5'-phosphate as cofactor. [2Fe-2S] cluster serves as cofactor.

The protein resides in the mitochondrion matrix. It catalyses the reaction 4-aminobutanoate + 2-oxoglutarate = succinate semialdehyde + L-glutamate. The enzyme catalyses (S)-3-amino-2-methylpropanoate + 2-oxoglutarate = 2-methyl-3-oxopropanoate + L-glutamate. Its function is as follows. Catalyzes the conversion of gamma-aminobutyrate and L-beta-aminoisobutyrate to succinate semialdehyde and methylmalonate semialdehyde, respectively. Can also convert delta-aminovalerate and beta-alanine. The protein is 4-aminobutyrate aminotransferase, mitochondrial (ABAT) of Bos taurus (Bovine).